The sequence spans 934 residues: Serine/threonine-protein kinase atg1 (934 aa).

The region spanning 22-328 (YTRLDEIGRG…SDFFDCDTIT (307 aa)) is the Protein kinase domain. ATP-binding positions include 28-36 (IGRGSFATV) and Lys51. Residue Asp165 is the Proton acceptor of the active site. Disordered regions lie at residues 335–432 (IADD…PRRP), 462–481 (RNTY…TKEE), 531–580 (RRPG…YGQS), 684–703 (TDPS…TDLT), 800–822 (RLPP…GSGA), and 878–900 (EEEE…RRDG). The segment covering 340–368 (PSTSRRSSVAVNTSGSTSRPQSRTGSRTP) has biased composition (polar residues). Residues 371–386 (MKREKDASYPGKKDDQ) are compositionally biased toward basic and acidic residues. A compositionally biased stretch (low complexity) spans 538-550 (SSTATATSPLATT). The segment covering 561–577 (ARADSTHTRQGSYERRY) has biased composition (basic and acidic residues).

This sequence belongs to the protein kinase superfamily. Ser/Thr protein kinase family. APG1/unc-51/ULK1 subfamily. Homodimer. Forms a ternary complex with ATG13 and ATG17.

The protein localises to the cytoplasm. Its subcellular location is the preautophagosomal structure membrane. The catalysed reaction is L-seryl-[protein] + ATP = O-phospho-L-seryl-[protein] + ADP + H(+). It catalyses the reaction L-threonyl-[protein] + ATP = O-phospho-L-threonyl-[protein] + ADP + H(+). Its function is as follows. Serine/threonine protein kinase involved in the cytoplasm to vacuole transport (Cvt) and found to be essential in autophagy, where it is required for the formation of autophagosomes. Involved in the clearance of protein aggregates which cannot be efficiently cleared by the proteasome. Required for selective autophagic degradation of the nucleus (nucleophagy) as well as for mitophagy which contributes to regulate mitochondrial quantity and quality by eliminating the mitochondria to a basal level to fulfill cellular energy requirements and preventing excess ROS production. Also involved in endoplasmic reticulum-specific autophagic process, in selective removal of ER-associated degradation (ERAD) substrates. Plays a key role in ATG9 and ATG23 cycling through the pre-autophagosomal structure and is necessary to promote ATG18 binding to ATG9 through phosphorylation of ATG9. Catalyzes phosphorylation of ATG4, decreasing the interaction between ATG4 and ATG8 and impairing deconjugation of PE-conjugated forms of ATG8. Required for conidiation and development of aerial hyphae. The chain is Serine/threonine-protein kinase atg1 from Aspergillus oryzae (strain ATCC 42149 / RIB 40) (Yellow koji mold).